The primary structure comprises 79 residues: Small ribosomal subunit protein bS18 (79 aa).

This sequence belongs to the bacterial ribosomal protein bS18 family. Part of the 30S ribosomal subunit. Forms a tight heterodimer with protein bS6.

Functionally, binds as a heterodimer with protein bS6 to the central domain of the 16S rRNA, where it helps stabilize the platform of the 30S subunit. The polypeptide is Small ribosomal subunit protein bS18 (Micrococcus luteus (strain ATCC 4698 / DSM 20030 / JCM 1464 / CCM 169 / CCUG 5858 / IAM 1056 / NBRC 3333 / NCIMB 9278 / NCTC 2665 / VKM Ac-2230) (Micrococcus lysodeikticus)).